Reading from the N-terminus, the 374-residue chain is MDSSSLLPSQWSDLPLDILELISDRLDHDSSDTIHLLCLRSVCATWRLSLPLSNKNNRLSKFPKYLPFWSSSSSSSGFFTLKQSNVYKLEAPLNPRTCLVKLQETTPGIMRVLDLFSNDRICFLPENFPSKIDLQEFHVRLVRRTYRMEYANNGGGAVPCFWSLHSDKVVILSSGEDSAIIAIHSGGKLGFLKSGNDEKWKILDNSWNVIYEDIMLYKDNRCIVVDDKGKTVIYDVDFKVSDLAEGLVGGGGHKKHLVECSGGEVFLVDKYVKTVWCKSDISKSVVEFRVYNLKREEKRWEEVRDLGDVALFIGDDCSFSVQNPAGDLAGGFIFYSDYRNGGRSRGICSDGDGVFNVDMQGDFVFSIKPNYFGP.

The region spanning 9–61 (SQWSDLPLDILELISDRLDHDSSDTIHLLCLRSVCATWRLSLPLSNKNNRLSK) is the F-box domain.

The sequence is that of Putative F-box protein At5g60060 from Arabidopsis thaliana (Mouse-ear cress).